We begin with the raw amino-acid sequence, 122 residues long: Large ribosomal subunit protein uL14 (122 aa).

It belongs to the universal ribosomal protein uL14 family. Part of the 50S ribosomal subunit. Forms a cluster with proteins L3 and L19. In the 70S ribosome, L14 and L19 interact and together make contacts with the 16S rRNA in bridges B5 and B8.

Binds to 23S rRNA. Forms part of two intersubunit bridges in the 70S ribosome. In Lactococcus lactis subsp. lactis (strain IL1403) (Streptococcus lactis), this protein is Large ribosomal subunit protein uL14.